A 207-amino-acid chain; its full sequence is MEDLLDLGEERRRCPATSGAKMGRRAQQESTQAENHLSGKNSSLTLTAEVPPPKPPRRQGRWAEASVKVSKSQRRASEEIQDHRLRQQSLDRSDDGGDIPVIPDLEEVQEEDFVLQVAAPPSIQVNRVMTYRDLDNDLMKYSAFQTLDGEIDLKLLTKVLAPEHEVREDDVSWDWDHLYTEVSSELLSEWDALQTEKEGPVGQPAHT.

M1 carries the N-acetylmethionine modification. The tract at residues 1–97 is disordered; that stretch reads MEDLLDLGEE…QSLDRSDDGG (97 aa). Residues 28–46 show a composition bias toward polar residues; that stretch reads QESTQAENHLSGKNSSLTL. The span at 75-95 shows a compositional bias: basic and acidic residues; sequence RASEEIQDHRLRQQSLDRSDD. S77 carries the phosphoserine modification.

The protein belongs to the IFT43 family. Component of the IFT complex A (IFT-A) complex. IFT-A complex is divided into a core subcomplex composed of IFT122:IFT140:WDR19 which is associated with TULP3 and a peripheral subcomplex composed of IFT43:WDR35:TTC21B. Interacts directy with IFT122, WDR35 and TTC21B.

Its subcellular location is the cytoplasm. The protein resides in the cytoskeleton. It localises to the cell projection. The protein localises to the cilium. Functionally, as a component of IFT complex A (IFT-A), a complex required for retrograde ciliary transport and entry into cilia of G protein-coupled receptors (GPCRs), it is involved in ciliogenesis. Involved in retrograde ciliary transport along microtubules from the ciliary tip to the base. The protein is Intraflagellar transport protein 43 homolog (IFT43) of Bos taurus (Bovine).